Consider the following 226-residue polypeptide: Histone H1.5 (226 aa).

The segment covering 1 to 16 (MSETAPAETATPAPVE) has biased composition (low complexity). The disordered stretch occupies residues 1–44 (MSETAPAETATPAPVEKSPAKKKATKKAAGAGAAKRKATGPPVS). Serine 2 bears the N-acetylserine; partial mark. Phosphoserine is present on serine 2. At threonine 11 the chain carries Phosphothreonine; by GSK3. At lysine 17 the chain carries N6-acetyllysine. Serine 18 is subject to Phosphoserine. N6-methyllysine is present on lysine 27. Position 37 is an N6-(beta-hydroxybutyryl)lysine; alternate (lysine 37). The residue at position 37 (lysine 37) is an N6-succinyllysine; alternate. Threonine 39 bears the Phosphothreonine mark. The region spanning 39-112 (TGPPVSELIT…GASGSFKLNK (74 aa)) is the H15 domain. The residue at position 49 (lysine 49) is an N6-acetyllysine. Lysine 55 is subject to N6-(beta-hydroxybutyryl)lysine. A Citrulline modification is found at arginine 57. Lysine 67 carries the N6-(beta-hydroxybutyryl)lysine modification. The residue at position 78 (lysine 78) is an N6-acetyllysine. N6-(beta-hydroxybutyryl)lysine is present on residues lysine 88, lysine 93, and lysine 109. Residues 98–226 (QTKGTGASGS…KAKKAAAKKK (129 aa)) are disordered. The segment covering 122–133 (KAKKAGAAKAKK) has biased composition (basic residues). A phosphothreonine mark is found at threonine 138 and threonine 155. The span at 140 to 161 (KKAKKAAGAKKAVKKTPKKAKK) shows a compositional bias: basic residues. Lysine 168 is modified (N6-acetyllysine). Over residues 169 to 187 (KVAKSPKKAKAAAKPKKAT) the composition is skewed to basic residues. Phosphoserine occurs at positions 173 and 189. Positions 194–226 (KAVKPKAAKPKAAKPKAAKPKAAKAKKAAAKKK) are enriched in basic residues.

The protein belongs to the histone H1/H5 family. In terms of assembly, interacts with MSX1. Post-translationally, H1 histones are progressively phosphorylated during the cell cycle, becoming maximally phosphorylated during late G2 phase and M phase, and being dephosphorylated sharply thereafter. Phosphorylated at Thr-11 by GSK3B during mitosis in prometaphase and dephosphorylated in telophase. In terms of processing, citrullination at Arg-57 (H1R54ci) by PADI4 takes place within the DNA-binding site of H1 and results in its displacement from chromatin and global chromatin decondensation, thereby promoting pluripotency and stem cell maintenance. As to expression, ubiquitous. Expressed in the majority of the cell lines tested and in testis.

The protein resides in the nucleus. Its subcellular location is the chromosome. In terms of biological role, histone H1 protein binds to linker DNA between nucleosomes forming the macromolecular structure known as the chromatin fiber. Histones H1 are necessary for the condensation of nucleosome chains into higher-order structured fibers. Also acts as a regulator of individual gene transcription through chromatin remodeling, nucleosome spacing and DNA methylation. The chain is Histone H1.5 from Homo sapiens (Human).